The sequence spans 94 residues: Neurotoxin LmNaTx45.2 (94 aa).

Positions 1-18 are cleaved as a signal peptide; sequence MKLAILSLFLVFQIGVES. Residues 20 to 86 enclose the LCN-type CS-alpha/beta domain; the sequence is KNGFALDHYG…IGDSRKNYCD (67 aa). Intrachain disulfides connect Cys-34/Cys-85, Cys-44/Cys-63, Cys-48/Cys-65, and Cys-59/Cys-85.

Belongs to the long (4 C-C) scorpion toxin superfamily. Sodium channel inhibitor family. Beta subfamily. As to expression, expressed by the venom gland.

The protein localises to the secreted. Its function is as follows. Binds voltage-independently at site-4 of sodium channels (Nav) and shift the voltage of activation toward more negative potentials thereby affecting sodium channel activation and promoting spontaneous and repetitive firing. The sequence is that of Neurotoxin LmNaTx45.2 from Lychas mucronatus (Chinese swimming scorpion).